The primary structure comprises 651 residues: Probable potassium transport system protein Kup (651 aa).

12 consecutive transmembrane segments (helical) span residues 41–61 (LVLGALGVVYGDIGTSPIYAF), 82–102 (VVSFIFWALTLVVTVKYVLFV), 130–150 (LILGVGICGAALFFGDAVITP), 163–183 (IVAPNLTPFVVPATVVILVTL), 194–214 (VAIVFGPIMALWFVALGASGL), 235–255 (FLTVSPAVAFVTVGAVFLAMT), 276–296 (WLWIVFPCLLLNYFGQAAFIL), 309–329 (MIPSFALWPMVLLATAATVIA), 366–386 (IYIPRVNLLLGLAVVILVLGF), 395–415 (AYGIAVTGNMLVTTVLLYIVM), 426–446 (ALPIILGFLVIDMLFFSANII), and 450–470 (EGGWASIGIATVLVLIMWTWV).

This sequence belongs to the HAK/KUP transporter (TC 2.A.72) family.

It is found in the cell inner membrane. It catalyses the reaction K(+)(in) + H(+)(in) = K(+)(out) + H(+)(out). Transport of potassium into the cell. Likely operates as a K(+):H(+) symporter. This is Probable potassium transport system protein Kup from Brucella ovis (strain ATCC 25840 / 63/290 / NCTC 10512).